A 337-amino-acid chain; its full sequence is LGVCYGMMGNNLPSHSEVIQLYKSRNIGRLRLYDPNHGALNALRGSNIEVILGLPNVDVKHIASGMEHARWWVQKNVKDFWPDVKIKYIAVGNEISPVTGTSSLTSFQVPALVNIYKAVGEAGLGNDIKVSTSVDMTLIGNSYPPSQGSFRNDVRWFTDPIVGFLRDTRAPLLVNIYPYFSYSGNPGQISLPYALFTAPNAVVQDGSRQYRNLFDAMLDSVYAAMERTGGGSVGIVVSESGWPSAGAFGATQDNAATYLRNLIQHAKEGSPRKPGPIETYIFAMFDENNKNPELEKHFGLFSPNKQPKYNLNFGVSERVWDISAETNSTASSLISEM.

Glu-94 serves as the catalytic Proton donor. The Nucleophile role is filled by Glu-239. Residues 315–337 (VSERVWDISAETNSTASSLISEM) constitute a propeptide, removed in mature form. Asn-327 carries an N-linked (GlcNAc...) asparagine glycan.

It belongs to the glycosyl hydrolase 17 family.

The protein resides in the vacuole. The catalysed reaction is Hydrolysis of (1-&gt;3)-beta-D-glucosidic linkages in (1-&gt;3)-beta-D-glucans.. Is thought to be an important plant defense-related product against fungal pathogens. This Solanum tuberosum (Potato) protein is Glucan endo-1,3-beta-glucosidase, basic isoform 1 (GLUB1).